The primary structure comprises 193 residues: Proton-translocating ferredoxin:NAD(+) oxidoreductase complex subunit A (193 aa).

Transmembrane regions (helical) follow at residues 11-31 (AVVV…FFGV), 39-59 (VGMG…AWVV), 62-82 (FVLI…LLIA), 102-122 (MWGI…VPIL), 134-154 (VVNA…MASL), and 171-191 (GVAF…SGMI).

Belongs to the NqrDE/RnfAE family. In terms of assembly, the complex is composed of six subunits: RnfA, RnfB, RnfC, RnfD, RnfE and RnfG.

It localises to the cell membrane. Its function is as follows. Part of a membrane-bound complex that couples electron transfer with translocation of ions across the membrane. Couples electron transfer from reduced ferredoxin to NAD(+) with translocation of H(+) out of the cell. Essential for energy conservation during autotrophic growth. Contributes to ATP synthesis during heterotrophic growth. This Clostridium ljungdahlii (strain ATCC 55383 / DSM 13528 / PETC) protein is Proton-translocating ferredoxin:NAD(+) oxidoreductase complex subunit A.